A 138-amino-acid chain; its full sequence is Acidic phospholipase A2 Tpu-E6a (138 aa).

An N-terminal signal peptide occupies residues 1-16 (MRTLWIMAVLLLGVKG). Cystine bridges form between cysteine 42–cysteine 131, cysteine 44–cysteine 60, cysteine 59–cysteine 111, cysteine 65–cysteine 138, cysteine 66–cysteine 104, cysteine 73–cysteine 97, and cysteine 91–cysteine 102. Tyrosine 43, glycine 45, and glycine 47 together coordinate Ca(2+). Residue histidine 63 is part of the active site. Ca(2+) is bound at residue aspartate 64. Residue aspartate 105 is part of the active site.

As to quaternary structure, monomer. The cofactor is Ca(2+). Expressed by the venom gland.

Its subcellular location is the secreted. The catalysed reaction is a 1,2-diacyl-sn-glycero-3-phosphocholine + H2O = a 1-acyl-sn-glycero-3-phosphocholine + a fatty acid + H(+). Its function is as follows. Snake venom phospholipase A2 (PLA2) that impairs hemostasis. It weakly inhibits ADP-induced platelet aggregation when tested on platelet rich plasma from human and rabbit blood (15-25% of inhibition at 5-10 ug of enzyme), and dose-dependently inhibits blood coagulation, possibly by inhibiting thrombin activation. Exhibits high hydrolytic activities toward L-dipalmitoyl phosphatidylcholine. PLA2 catalyzes the calcium-dependent hydrolysis of the 2-acyl groups in 3-sn-phosphoglycerides. This Craspedocephalus puniceus (Flat-nosed pitviper) protein is Acidic phospholipase A2 Tpu-E6a.